The chain runs to 203 residues: ATP-dependent dethiobiotin synthetase BioD (203 aa).

Residue 11–16 participates in ATP binding; the sequence is NVGKTI. Residue threonine 15 coordinates Mg(2+). Lysine 31 is a catalytic residue. Residue threonine 35 participates in substrate binding. Residues aspartate 42 and 94–97 contribute to the ATP site; that span reads EGAG. Positions 42 and 94 each coordinate Mg(2+).

This sequence belongs to the dethiobiotin synthetase family. Homodimer. Mg(2+) serves as cofactor.

The protein resides in the cytoplasm. It catalyses the reaction (7R,8S)-7,8-diammoniononanoate + CO2 + ATP = (4R,5S)-dethiobiotin + ADP + phosphate + 3 H(+). It functions in the pathway cofactor biosynthesis; biotin biosynthesis; biotin from 7,8-diaminononanoate: step 1/2. Functionally, catalyzes a mechanistically unusual reaction, the ATP-dependent insertion of CO2 between the N7 and N8 nitrogen atoms of 7,8-diaminopelargonic acid (DAPA, also called 7,8-diammoniononanoate) to form a ureido ring. The polypeptide is ATP-dependent dethiobiotin synthetase BioD (Lawsonia intracellularis (strain PHE/MN1-00)).